Consider the following 276-residue polypeptide: Bifunctional protein FolD (276 aa).

Residues 158–160 (NRS), Ser183, and Ile224 each bind NADP(+).

It belongs to the tetrahydrofolate dehydrogenase/cyclohydrolase family. As to quaternary structure, homodimer.

It carries out the reaction (6R)-5,10-methylene-5,6,7,8-tetrahydrofolate + NADP(+) = (6R)-5,10-methenyltetrahydrofolate + NADPH. The catalysed reaction is (6R)-5,10-methenyltetrahydrofolate + H2O = (6R)-10-formyltetrahydrofolate + H(+). Its pathway is one-carbon metabolism; tetrahydrofolate interconversion. In terms of biological role, catalyzes the oxidation of 5,10-methylenetetrahydrofolate to 5,10-methenyltetrahydrofolate and then the hydrolysis of 5,10-methenyltetrahydrofolate to 10-formyltetrahydrofolate. In Picrophilus torridus (strain ATCC 700027 / DSM 9790 / JCM 10055 / NBRC 100828 / KAW 2/3), this protein is Bifunctional protein FolD.